A 367-amino-acid chain; its full sequence is Homoserine O-acetyltransferase (367 aa).

The 307-residue stretch at 44 to 350 folds into the AB hydrolase-1 domain; the sequence is NVIMVEHAWT…AYGHDAFLLE (307 aa). Ser-150 (nucleophile) is an active-site residue. Arg-217 serves as a coordination point for substrate. Residues Asp-311 and His-344 contribute to the active site. Asp-345 is a binding site for substrate.

It belongs to the AB hydrolase superfamily. MetX family. In terms of assembly, homodimer.

It is found in the cytoplasm. It catalyses the reaction L-homoserine + acetyl-CoA = O-acetyl-L-homoserine + CoA. The protein operates within amino-acid biosynthesis; L-methionine biosynthesis via de novo pathway; O-acetyl-L-homoserine from L-homoserine: step 1/1. In terms of biological role, transfers an acetyl group from acetyl-CoA to L-homoserine, forming acetyl-L-homoserine. In vitro, can also use propionyl-CoA or butiryl-CoA as acyl donor. This is Homoserine O-acetyltransferase from Trichlorobacter lovleyi (strain ATCC BAA-1151 / DSM 17278 / SZ) (Geobacter lovleyi).